Here is a 457-residue protein sequence, read N- to C-terminus: tRNA-2-methylthio-N(6)-dimethylallyladenosine synthase (457 aa).

Residues 3 to 120 (KKVYVKTFGC…LPQMIDARRA (118 aa)) form the MTTase N-terminal domain. [4Fe-4S] cluster-binding residues include C12, C49, C83, C157, C161, and C164. Positions 143–377 (RVEGPSAFVS…QATIEENVAR (235 aa)) constitute a Radical SAM core domain. In terms of domain architecture, TRAM spans 380–447 (QSMVGKVERI…PHSLRGELLL (68 aa)).

The protein belongs to the methylthiotransferase family. MiaB subfamily. As to quaternary structure, monomer. The cofactor is [4Fe-4S] cluster.

It localises to the cytoplasm. The catalysed reaction is N(6)-dimethylallyladenosine(37) in tRNA + (sulfur carrier)-SH + AH2 + 2 S-adenosyl-L-methionine = 2-methylsulfanyl-N(6)-dimethylallyladenosine(37) in tRNA + (sulfur carrier)-H + 5'-deoxyadenosine + L-methionine + A + S-adenosyl-L-homocysteine + 2 H(+). Functionally, catalyzes the methylthiolation of N6-(dimethylallyl)adenosine (i(6)A), leading to the formation of 2-methylthio-N6-(dimethylallyl)adenosine (ms(2)i(6)A) at position 37 in tRNAs that read codons beginning with uridine. This is tRNA-2-methylthio-N(6)-dimethylallyladenosine synthase from Burkholderia vietnamiensis (strain G4 / LMG 22486) (Burkholderia cepacia (strain R1808)).